The chain runs to 126 residues: Small ribosomal subunit protein bS6 (126 aa).

A disordered region spans residues 101–126; the sequence is VMMKAKEERTAKREDAAPRAEEAAAE. Residues 104-126 show a composition bias toward basic and acidic residues; the sequence is KAKEERTAKREDAAPRAEEAAAE.

This sequence belongs to the bacterial ribosomal protein bS6 family.

Its function is as follows. Binds together with bS18 to 16S ribosomal RNA. This Aliivibrio salmonicida (strain LFI1238) (Vibrio salmonicida (strain LFI1238)) protein is Small ribosomal subunit protein bS6.